The chain runs to 412 residues: Tyrosine--tRNA ligase (412 aa).

The 'HIGH' region motif lies at 48 to 57 (PSRPDLHLGH). Residues 232-236 (KMSKS) carry the 'KMSKS' region motif. Lys235 lines the ATP pocket. One can recognise an S4 RNA-binding domain in the interval 342 to 405 (VGLLNLMRHA…GKRRFARIRP (64 aa)).

Belongs to the class-I aminoacyl-tRNA synthetase family. TyrS type 2 subfamily. As to quaternary structure, homodimer.

The protein localises to the cytoplasm. The catalysed reaction is tRNA(Tyr) + L-tyrosine + ATP = L-tyrosyl-tRNA(Tyr) + AMP + diphosphate + H(+). Its function is as follows. Catalyzes the attachment of tyrosine to tRNA(Tyr) in a two-step reaction: tyrosine is first activated by ATP to form Tyr-AMP and then transferred to the acceptor end of tRNA(Tyr). In Salinibacter ruber (strain DSM 13855 / M31), this protein is Tyrosine--tRNA ligase.